Consider the following 475-residue polypeptide: ATP synthase subunit beta, chloroplastic (475 aa).

155-162 (GGAGVGKT) contributes to the ATP binding site.

The protein belongs to the ATPase alpha/beta chains family. In terms of assembly, F-type ATPases have 2 components, CF(1) - the catalytic core - and CF(0) - the membrane proton channel. CF(1) has five subunits: alpha(3), beta(3), gamma(1), delta(1), epsilon(1). CF(0) has four main subunits: a(1), b(1), b'(1) and c(9-12).

The protein localises to the plastid. The protein resides in the chloroplast thylakoid membrane. The enzyme catalyses ATP + H2O + 4 H(+)(in) = ADP + phosphate + 5 H(+)(out). Its function is as follows. Produces ATP from ADP in the presence of a proton gradient across the membrane. The catalytic sites are hosted primarily by the beta subunits. The chain is ATP synthase subunit beta, chloroplastic from Porphyra purpurea (Red seaweed).